A 433-amino-acid polypeptide reads, in one-letter code: Trigger factor (433 aa).

The 86-residue stretch at 166–251 (GDFAVIDFEG…LHEIQERAKP (86 aa)) folds into the PPIase FKBP-type domain.

The protein belongs to the FKBP-type PPIase family. Tig subfamily.

The protein localises to the cytoplasm. It catalyses the reaction [protein]-peptidylproline (omega=180) = [protein]-peptidylproline (omega=0). Its function is as follows. Involved in protein export. Acts as a chaperone by maintaining the newly synthesized protein in an open conformation. Functions as a peptidyl-prolyl cis-trans isomerase. The protein is Trigger factor of Aliarcobacter butzleri (strain RM4018) (Arcobacter butzleri).